The chain runs to 756 residues: LIM domain and actin-binding protein 1 (756 aa).

Met1 carries the post-translational modification N-acetylmethionine. A phosphoserine mark is found at Ser15 and Ser55. A compositionally biased stretch (basic and acidic residues) spans 44-56; sequence AAEEANMEKRRSN. Disordered regions lie at residues 44–183 and 204–377; these read AAEE…SNKI and QTKI…AVKK. The span at 107-118 shows a compositional bias: low complexity; the sequence is EVASSSASGVEA. Ser130 carries the post-translational modification Phosphoserine. Over residues 140–173 the composition is skewed to basic and acidic residues; sequence RIKDTEHLKDHSAESKKMENCLAESRHEVGKPET. The Required for interaction with NPC1L1 signature appears at 164-166; sequence SRH. Residue Ser221 is modified to Phosphoserine. Tyr225 is subject to Phosphotyrosine. Phosphoserine occurs at positions 226 and 238. A compositionally biased stretch (basic and acidic residues) spans 245–254; the sequence is EKSESRRNLE. Ser259 is subject to Phosphoserine. Residues 274–287 are compositionally biased toward polar residues; sequence VSKQSSSTNYTNEL. Positions 294–303 are enriched in basic and acidic residues; that stretch reads IKTHKLEQKE. Ser339, Ser346, Ser358, Ser365, and Ser370 each carry phosphoserine. The 61-residue stretch at 384–444 folds into the LIM zinc-binding domain; the sequence is ETCVECQKTV…KPHFNQLFKS (61 aa). Lys435 bears the N6-succinyllysine mark. The residue at position 486 (Ser486) is a Phosphoserine. The tract at residues 489–509 is required for interaction with MYO5B; it reads VEDAPIAKVGVLTASMEAKAS. A disordered region spans residues 508–726; the sequence is ASSQLEKEDK…TTQKQKSQDV (219 aa). Residues 512 to 523 show a composition bias toward basic and acidic residues; it reads LEKEDKPAETKK. Positions 533 to 542 are enriched in low complexity; sequence ELSSSGSALE. A compositionally biased stretch (basic and acidic residues) spans 552 to 563; it reads WPPEDEVSKPEA. 4 positions are modified to phosphoserine: Ser597, Ser600, Ser605, and Ser613. Basic and acidic residues predominate over residues 627–637; sequence AERKQMEKASA. The span at 638–651 shows a compositional bias: polar residues; that stretch reads SEKNGSVGKTTWPS. The segment covering 652-667 has biased composition (basic and acidic residues); that stretch reads KESRGGEAAGRSKEVQ. A compositionally biased stretch (polar residues) spans 691-721; sequence LQQQSPLEPKSKNWSSFADNTSAKEFTTQKQ. 3 positions are modified to phosphoserine: Ser695, Ser723, and Ser738.

Interacts with NPC1L1; bridges NPC1L1 with MYO5B. Interacts with MYO5B; bridges MYO5B with NPC1L1. Interacts with PXN; this complex stabilizes actin dynamics. Interacts with F-actin and G-actin. Interacts with LUZP1 (via C-terminus); both proteins restrict ciliation and may work together to regulate this process. Binds RAB40B (GTP-bound); interaction influences LIMA1 subcellular localization in lamellipodia during cell migration. In terms of processing, phosphorylation of the C-terminal region by MAPK1/MAPK3 reduces its association with F-actin and contributes to actin filament reorganization and enhances cell motility. Post-translationally, ubiquitinated by the ECS(RAB40B) complex leading to its degradation. Widely expressed. Highest levels of isoform 2 are expressed in lung, spleen and small intestine. Isoform 2 is expressed at higher levels than isoform 1 in most tissues except liver, fat and kidney. Isoform 1 and isoform 2 are expressed at low levels in skeletal muscle, heart, stomach and lymph.

It localises to the cytoplasm. The protein localises to the cell junction. Its subcellular location is the focal adhesion. The protein resides in the cytoskeleton. It is found in the stress fiber. It localises to the cell membrane. The protein localises to the cell projection. Its subcellular location is the ruffle. The protein resides in the lamellipodium. Actin-binding protein involved in actin cytoskeleton regulation and dynamics. Increases the number and size of actin stress fibers and inhibits membrane ruffling. Inhibits actin filament depolymerization. Bundles actin filaments, delays filament nucleation and reduces formation of branched filaments. Acts as a negative regulator of primary cilium formation. Plays a role in cholesterol homeostasis. Influences plasma cholesterol levels through regulation of intestinal cholesterol absorption. May act as a scaffold protein by regulating NPC1L1 transportation, an essential protein for cholesterol absorption, to the plasma membrane by recruiting MYO5B to NPC1L1, and thus facilitates cholesterol uptake. The polypeptide is LIM domain and actin-binding protein 1 (Sus scrofa (Pig)).